The primary structure comprises 53 residues: MLSWAITFLIIAIVAAVLGFGGIAGAATGIAKILFIIFLVLFVASFFFGRGRG.

Helical transmembrane passes span W4 to A24 and G29 to G49.

The protein belongs to the UPF0391 family.

The protein localises to the cell membrane. The polypeptide is UPF0391 membrane protein PSEEN0090 (Pseudomonas entomophila (strain L48)).